A 439-amino-acid chain; its full sequence is Trehalose-phosphatase (439 aa).

Mg(2+) contacts are provided by D163 and D165. D165 serves as the catalytic Proton donor/acceptor. Residue 282–284 (QRK) coordinates substrate. D373 serves as a coordination point for Mg(2+).

Belongs to the gob-1 trehalose phosphatase family. Requires Mg(2+) as cofactor. In terms of tissue distribution, ubiquitously expressed. Strong expression in intestine.

It catalyses the reaction alpha,alpha-trehalose 6-phosphate + H2O = alpha,alpha-trehalose + phosphate. In terms of biological role, catalyzes the hydrolysis of trehalose 6-phosphate to trehalose and phosphate; prevents the accumulation of toxic levels of trehalose 6-phosphate. The sequence is that of Trehalose-phosphatase from Caenorhabditis elegans.